Here is a 209-residue protein sequence, read N- to C-terminus: MNKQPSQLAGVYAVTQPRPDLQEAVAAVLRGGVGIVQYRDKSEDADRRREEAGALCRLCEEYGALFLVNDDVDLAAAVAAHGVHLGRDDGAVVAARQQLGDTAWIGVSCYDDLDRARRLVAEGADYVAFGSIFPSPTKPESGLAPMELLRSGREATGCPTVAIGGIDAGNIHEVAAAGADAAAVVSALFAAEDPEAAARQLVAQWQRSR.

4-amino-2-methyl-5-(diphosphooxymethyl)pyrimidine contacts are provided by residues 37–41 and Asn-69; that span reads QYRDK. Residues Asp-70 and Asp-89 each contribute to the Mg(2+) site. Residue Ser-108 participates in 4-amino-2-methyl-5-(diphosphooxymethyl)pyrimidine binding. Residue 135 to 137 participates in 2-[(2R,5Z)-2-carboxy-4-methylthiazol-5(2H)-ylidene]ethyl phosphate binding; sequence SPT. Lys-138 is a 4-amino-2-methyl-5-(diphosphooxymethyl)pyrimidine binding site. 2-[(2R,5Z)-2-carboxy-4-methylthiazol-5(2H)-ylidene]ethyl phosphate-binding positions include Gly-165 and 185–186; that span reads VS.

The protein belongs to the thiamine-phosphate synthase family. Requires Mg(2+) as cofactor.

It catalyses the reaction 2-[(2R,5Z)-2-carboxy-4-methylthiazol-5(2H)-ylidene]ethyl phosphate + 4-amino-2-methyl-5-(diphosphooxymethyl)pyrimidine + 2 H(+) = thiamine phosphate + CO2 + diphosphate. It carries out the reaction 2-(2-carboxy-4-methylthiazol-5-yl)ethyl phosphate + 4-amino-2-methyl-5-(diphosphooxymethyl)pyrimidine + 2 H(+) = thiamine phosphate + CO2 + diphosphate. The catalysed reaction is 4-methyl-5-(2-phosphooxyethyl)-thiazole + 4-amino-2-methyl-5-(diphosphooxymethyl)pyrimidine + H(+) = thiamine phosphate + diphosphate. The protein operates within cofactor biosynthesis; thiamine diphosphate biosynthesis; thiamine phosphate from 4-amino-2-methyl-5-diphosphomethylpyrimidine and 4-methyl-5-(2-phosphoethyl)-thiazole: step 1/1. Condenses 4-methyl-5-(beta-hydroxyethyl)thiazole monophosphate (THZ-P) and 2-methyl-4-amino-5-hydroxymethyl pyrimidine pyrophosphate (HMP-PP) to form thiamine monophosphate (TMP). In Halorhodospira halophila (strain DSM 244 / SL1) (Ectothiorhodospira halophila (strain DSM 244 / SL1)), this protein is Thiamine-phosphate synthase.